The following is a 79-amino-acid chain: Small ribosomal subunit protein uS17 (79 aa).

This sequence belongs to the universal ribosomal protein uS17 family. In terms of assembly, part of the 30S ribosomal subunit.

In terms of biological role, one of the primary rRNA binding proteins, it binds specifically to the 5'-end of 16S ribosomal RNA. This chain is Small ribosomal subunit protein uS17, found in Roseobacter denitrificans (strain ATCC 33942 / OCh 114) (Erythrobacter sp. (strain OCh 114)).